Reading from the N-terminus, the 360-residue chain is A-type ATP synthase subunit C (360 aa).

The segment at 1 to 25 (MRLLEKLWGQKPSRKSDKKKNGTSN) is disordered.

This sequence belongs to the V-ATPase V0D/AC39 subunit family. In terms of assembly, has multiple subunits with at least A(3), B(3), C, D, E, F, H, I and proteolipid K(x).

It localises to the cell membrane. Its function is as follows. Component of the A-type ATP synthase that produces ATP from ADP in the presence of a proton gradient across the membrane. The polypeptide is A-type ATP synthase subunit C (Methanosarcina barkeri (strain Fusaro / DSM 804)).